Reading from the N-terminus, the 195-residue chain is Guanylate kinase (195 aa).

The Guanylate kinase-like domain occupies glycine 10–alanine 189. Alanine 17–serine 24 is a binding site for ATP.

The protein belongs to the guanylate kinase family.

The protein localises to the cytoplasm. The catalysed reaction is GMP + ATP = GDP + ADP. Essential for recycling GMP and indirectly, cGMP. In Chlorobaculum tepidum (strain ATCC 49652 / DSM 12025 / NBRC 103806 / TLS) (Chlorobium tepidum), this protein is Guanylate kinase.